The sequence spans 149 residues: Oocyte-expressed protein homolog (149 aa).

The interval 1–23 (MVDDAGTAESQRGKQTPADSLEQ) is disordered. Polar residues predominate over residues 8–18 (AESQRGKQTPA). The region spanning 49–110 (PLVFYLEAWL…SVQNRVKSML (62 aa)) is the KH; atypical domain.

This sequence belongs to the KHDC1 family. As to quaternary structure, component of the subcortical maternal complex (SCMC), at least composed of NLRP5, KHDC3, OOEP, and TLE6. Within the complex, interacts with NLRP5, KHDC3 and TLE6. As part of the SCMC interacts with the SCMC-associated protein NLRP4F. The SCMC may facilitate translocation of its components between the nuclear and cytoplasmic compartments. Forms a scaffold complex with KHDC3/FILIA, and interacts with BLM and TRIM25 at DNA replication forks.

The protein resides in the cytoplasm. It localises to the nucleus. Its function is as follows. Component of the subcortical maternal complex (SCMC), a multiprotein complex that plays a key role in early embryonic development. The SCMC complex is a structural constituent of cytoplasmic lattices, which consist in fibrous structures found in the cytoplasm of oocytes and preimplantation embryos. They are required to store maternal proteins critical for embryonic development, such as proteins that control epigenetic reprogramming of the preimplantation embryo, and prevent their degradation or activation. As part of the OOEP-KHDC3 scaffold, recruits BLM and TRIM25 to DNA replication forks, thereby promoting the ubiquitination of BLM by TRIM25, enhancing BLM retainment at replication forks and therefore promoting stalled replication fork restart. Positively regulates the homologous recombination-mediated DNA double-strand break (DSB) repair pathway by regulating ATM activation and RAD51 recruitment to DSBs in oocytes. Thereby contributes to oocyte survival and the resumption and completion of meiosis. This chain is Oocyte-expressed protein homolog (OOEP), found in Papio anubis (Olive baboon).